We begin with the raw amino-acid sequence, 71 residues long: Small ribosomal subunit protein bS21 (71 aa).

This sequence belongs to the bacterial ribosomal protein bS21 family.

The polypeptide is Small ribosomal subunit protein bS21 (Shewanella sediminis (strain HAW-EB3)).